The sequence spans 186 residues: Putative 3-methyladenine DNA glycosylase (186 aa).

Belongs to the DNA glycosylase MPG family.

This Borreliella afzelii (strain PKo) (Borrelia afzelii) protein is Putative 3-methyladenine DNA glycosylase.